Reading from the N-terminus, the 506-residue chain is Histone acetyltransferase esa-1 (506 aa).

The interval 1–24 (MSPPGGDATVGSDEKRQKGKATPD) is disordered. The Tudor-knot domain maps to 26 to 78 (IKMGCIAMVMKEGQLRRAEILSIKDTKSGRQFYCNFDNFNKRLDEWVPAARID). The interval 82-215 (DVEWPNPDKD…LRTSGSMTQN (134 aa)) is disordered. Basic and acidic residues predominate over residues 87 to 98 (NPDKDKQKDAKT). Over residues 109–120 (QPSKKNNQKKAS) the composition is skewed to basic residues. Positions 167–178 (GGDKGVKRKADE) are enriched in basic and acidic residues. The MYST-type HAT domain occupies 220 to 494 (SRIRNISKVE…IDPERIQWKP (275 aa)). A C2HC MYST-type zinc finger spans residues 253-278 (IYICEFCLSYYGELKSFVRHRQKCTL). Residues 303 to 324 (RTWCRNLCLLSKMFLDHKTLYY) carry the ESA1-RPD3 motif motif. Lys320 carries the post-translational modification N6-acetyllysine; by autocatalysis. Acetyl-CoA is bound by residues 361-365 (ACILT) and 370-376 (QRKGYGR). The active-site Proton donor/acceptor is the Glu396. Ser400 contributes to the acetyl-CoA binding site.

Belongs to the MYST (SAS/MOZ) family. As to quaternary structure, component of the NuA4 histone acetyltransferase complex. Post-translationally, autoacetylation at Lys-320 is required for proper function.

Its subcellular location is the nucleus. The protein resides in the chromosome. It carries out the reaction L-lysyl-[histone] + acetyl-CoA = N(6)-acetyl-L-lysyl-[histone] + CoA + H(+). The enzyme catalyses L-lysyl-[protein] + acetyl-CoA = N(6)-acetyl-L-lysyl-[protein] + CoA + H(+). It catalyses the reaction 2-hydroxyisobutanoyl-CoA + L-lysyl-[protein] = N(6)-(2-hydroxyisobutanoyl)-L-lysyl-[protein] + CoA + H(+). The catalysed reaction is (2E)-butenoyl-CoA + L-lysyl-[protein] = N(6)-(2E)-butenoyl-L-lysyl-[protein] + CoA + H(+). Functionally, catalytic component of the NuA4 histone acetyltransferase (HAT) complex which is involved in epigenetic transcriptional activation of selected genes principally by acetylation of nucleosomal histones H4, H3, H2B, H2A and H2A variant H2A.Z. Acetylates histone H4 to form H4K5ac, H4K8ac, H4K12ac and H4K16ac, histone H3 to form H3K14ac, and histone H2A to form H2AK4ac and H2AK7ac. The NuA4 complex is involved in the DNA damage response and is required for chromosome segregation. The NuA4 complex plays a direct role in repair of DNA double-strand breaks (DSBs) through homologous recombination. Recruitment to promoters depends on H3K4me. Also acetylates non-histone proteins. In addition to protein acetyltransferase, can use different acyl-CoA substrates, such as 2-hydroxyisobutanoyl-CoA (2-hydroxyisobutyryl-CoA) or (2E)-butenoyl-CoA (crotonyl-CoA), and is able to mediate protein 2-hydroxyisobutyrylation and crotonylation, respectively. The polypeptide is Histone acetyltransferase esa-1 (esa-1) (Neurospora crassa (strain ATCC 24698 / 74-OR23-1A / CBS 708.71 / DSM 1257 / FGSC 987)).